The primary structure comprises 294 residues: 3-methyl-2-oxobutanoate hydroxymethyltransferase 1 (294 aa).

Aspartate 55 contributes to the Mg(2+) binding site. 3-methyl-2-oxobutanoate is bound by residues 55 to 56 and lysine 123; that span reads DS. The active-site Proton acceptor is glutamate 192.

Belongs to the PanB family. In terms of assembly, homodecamer; pentamer of dimers. Requires Mg(2+) as cofactor.

It localises to the cytoplasm. It catalyses the reaction 3-methyl-2-oxobutanoate + (6R)-5,10-methylene-5,6,7,8-tetrahydrofolate + H2O = 2-dehydropantoate + (6S)-5,6,7,8-tetrahydrofolate. The protein operates within cofactor biosynthesis; (R)-pantothenate biosynthesis; (R)-pantoate from 3-methyl-2-oxobutanoate: step 1/2. In terms of biological role, catalyzes the reversible reaction in which hydroxymethyl group from 5,10-methylenetetrahydrofolate is transferred onto alpha-ketoisovalerate to form ketopantoate. The sequence is that of 3-methyl-2-oxobutanoate hydroxymethyltransferase 1 from Methylibium petroleiphilum (strain ATCC BAA-1232 / LMG 22953 / PM1).